A 166-amino-acid polypeptide reads, in one-letter code: Small ribosomal subunit protein cS23z (166 aa).

Belongs to the chloroplast-specific ribosomal protein cS23 family. Part of the 30S ribosomal subunit.

The protein resides in the plastid. The protein localises to the chloroplast. Its function is as follows. Component of the chloroplast ribosome (chloro-ribosome), a dedicated translation machinery responsible for the synthesis of chloroplast genome-encoded proteins, including proteins of the transcription and translation machinery and components of the photosynthetic apparatus. The polypeptide is Small ribosomal subunit protein cS23z (Arabidopsis thaliana (Mouse-ear cress)).